The chain runs to 219 residues: Ribose-5-phosphate isomerase A (219 aa).

Residues 28–31 (TGST), 81–84 (DGAD), and 94–97 (KGGG) each bind substrate. The Proton acceptor role is filled by glutamate 103. A substrate-binding site is contributed by lysine 121.

It belongs to the ribose 5-phosphate isomerase family. In terms of assembly, homodimer.

The catalysed reaction is aldehydo-D-ribose 5-phosphate = D-ribulose 5-phosphate. It functions in the pathway carbohydrate degradation; pentose phosphate pathway; D-ribose 5-phosphate from D-ribulose 5-phosphate (non-oxidative stage): step 1/1. In terms of biological role, catalyzes the reversible conversion of ribose-5-phosphate to ribulose 5-phosphate. This is Ribose-5-phosphate isomerase A from Nitrosomonas europaea (strain ATCC 19718 / CIP 103999 / KCTC 2705 / NBRC 14298).